Here is a 197-residue protein sequence, read N- to C-terminus: GTP cyclohydrolase-2 (197 aa).

Residue 50-54 (RIHSE) participates in GTP binding. Zn(2+)-binding residues include C55, C66, and C68. GTP contacts are provided by residues Q71, 93–95 (EGR), and T115. The active-site Proton acceptor is D127. The active-site Nucleophile is the R129. GTP contacts are provided by T150 and K155.

This sequence belongs to the GTP cyclohydrolase II family. The cofactor is Zn(2+).

It carries out the reaction GTP + 4 H2O = 2,5-diamino-6-hydroxy-4-(5-phosphoribosylamino)-pyrimidine + formate + 2 phosphate + 3 H(+). Its pathway is cofactor biosynthesis; riboflavin biosynthesis; 5-amino-6-(D-ribitylamino)uracil from GTP: step 1/4. Its function is as follows. Catalyzes the conversion of GTP to 2,5-diamino-6-ribosylamino-4(3H)-pyrimidinone 5'-phosphate (DARP), formate and pyrophosphate. This is GTP cyclohydrolase-2 from Aeromonas hydrophila subsp. hydrophila (strain ATCC 7966 / DSM 30187 / BCRC 13018 / CCUG 14551 / JCM 1027 / KCTC 2358 / NCIMB 9240 / NCTC 8049).